The primary structure comprises 573 residues: Patellin-1 (573 aa).

2 disordered regions span residues 1-74 (MAQE…SVKE) and 111-202 (REFT…DGTK). Position 2 is an N-acetylalanine (A2). A compositionally biased stretch (basic and acidic residues) spans 18–28 (VKEKPITDKEV). The residue at position 29 (T29) is a Phosphothreonine. Residues 35 to 74 (AEKEEVAAPVSDEKAVPEKEVTPEKEAPAAEAEKSVSVKE) are compositionally biased toward basic and acidic residues. The stretch at 89-157 (AEEVQKKALE…TTEVKVEEEK (69 aa)) forms a coiled coil. The residue at position 118 (T118) is a Phosphothreonine. Basic and acidic residues-rich tracts occupy residues 120–169 (VKEE…EKSS) and 176–190 (TKSE…EVTT). S195 is modified (phosphoserine). A Glycyl lysine isopeptide (Lys-Gly) (interchain with G-Cter in ubiquitin) cross-link involves residue K285. The CRAL-TRIO domain occupies 295–468 (SGEEVSEFEK…KYGGLSKDTP (174 aa)). The GOLD domain occupies 471–572 (EETITEAIVK…KKKVLYRFKT (102 aa)).

The protein belongs to the patellin family. As to quaternary structure, interacts with the deubiquitinating enzyme AMSH3. In terms of tissue distribution, expressed ubiquitously with higher levels in expanding roots and leaves (at protein level).

It localises to the membrane. Its subcellular location is the cytoplasm. Carrier protein that may be involved in membrane-trafficking events associated with cell plate formation during cytokinesis. Binds to some hydrophobic molecules and promotes their transfer between the different cellular sites. Binds to phosphoinositides with a preference for PtdIns(5)P, PtdIns(4,5)P2 and PtdIns(3)P. This Arabidopsis thaliana (Mouse-ear cress) protein is Patellin-1 (PATL1).